Here is a 489-residue protein sequence, read N- to C-terminus: MLEPVSTAQSLWSFGLWILVILSPVLFFASRELGILNAKKRFAKNGFEEVLAGLRKSDVFGLMTINGPKIVLAPKFAQEIRSNPALSVSAFSSSELHAHIRGFDVFRQGEADDILQDTVRSKITQSIGDLIQPLSEECSLTLKPKWTDSPEWHEVCPHTTILDIIARLSSRAFIGDELCRNPKWLRLTVDFTVDSFRAAEALNWWPYALRPLVARFLPSCLKLHKYIQDADNMMKPVLESRRQAQAKDPQKSYPDTIQWFEETAQGRPYDPVRLQLTLAFASIHTTADLVIQTILDLCSAKNWDELCRSLREEIISSFREEGWRKPLLAKLKIMDSALKESQRLKPVSIVGMGRIAKEAVKLSNNTIIPKGTRLLVSNTAMWDPEIYPDPRTYDPYRFLRLREASENESAGQLVSLSPTHLSFGLGKHACPGRFFAAAEVKIILCHILLKYDIKLADGCKPKPLRAGTNLVADPTAKLLVRRRQEEVAL.

A helical membrane pass occupies residues Ser-10–Ser-30. Residues Asn-364 and Asn-407 are each glycosylated (N-linked (GlcNAc...) asparagine). Cys-430 is a binding site for heme.

It belongs to the cytochrome P450 family. Heme serves as cofactor.

The protein localises to the membrane. It participates in secondary metabolite biosynthesis; terpenoid biosynthesis. In terms of biological role, cytochrome P450 monooxygenase; part of the gene cluster that mediates the biosynthesis of terretonin, a fungal meroterpenoid that acts as a mycotoxin. The first step of the pathway is the synthesis of 3,5-dimethylorsellinic acid (DMOA) by the polyketide synthase trt4. DMOA is then prenylated into farnesyl-DMOA by the polyprenyl transferase trt2. Methylation by the methyltransferase trt5 then leads to farnesyl-DMOA methyl ester which is further subject to epoxidation by the FAD-dependent monooxygenase trt8 to yield epoxyfarnesyl-DMOA methyl ester. Cyclization of epoxyfarnesyl-DMOA methyl ester by the terpene cyclase trt1 leads to a tetracycle intermediate which is in turn converted to preterretonin. Dehydrogenase trt9 comes next to transform preterretonin to preterrenoid. The FAD-dependent monooxygenase trt3 is then required for the C-hydroxylation at C16 of preterrenoid to yield terrenoid. The cytochrome P450 trt6 catalyzes three successive oxidations to transform terrenoid into an unstable intermediate, which then undergoes the D-ring expansion and unusual rearrangement of the methoxy group to afford the core skeleton of terretonin. Trt14 catalyzes the D-ring expansion of terretonin involving intramolecular methoxy rearrangement as well as the hydrolysis of the expanded D-ring and the methyl ester moiety. Finally, the nonheme iron-dependent dioxygenase trt7 accomplishes the last two oxidation reactions steps to complete the biosynthesis of terretonin. Terretonin C is produced via spontaneous decarboxylation of the terretonin precursor. Another shunt product of the terretonin biosynthesis is dihydrofarnesyl-DMOA, derived from epoxyfarnesyl-DMOA through hydrolysis of the epoxide. This Aspergillus terreus (strain NIH 2624 / FGSC A1156) protein is Cytochrome P450 monooxygenase trt6.